We begin with the raw amino-acid sequence, 91 residues long: Small ribosomal subunit protein bS20 (91 aa).

The span at 1-18 (MPLHKSAEKRLRQSERRN) shows a compositional bias: basic and acidic residues. The segment at 1 to 25 (MPLHKSAEKRLRQSERRNARNRARK) is disordered.

The protein belongs to the bacterial ribosomal protein bS20 family.

Functionally, binds directly to 16S ribosomal RNA. This chain is Small ribosomal subunit protein bS20, found in Chlorobium luteolum (strain DSM 273 / BCRC 81028 / 2530) (Pelodictyon luteolum).